Consider the following 139-residue polypeptide: Hydrogenase maturation factor HypA (139 aa).

Residue His2 participates in Ni(2+) binding. Zn(2+)-binding residues include Cys73, Cys76, Cys110, and Cys113.

This sequence belongs to the HypA/HybF family.

Involved in the maturation of [NiFe] hydrogenases. Required for nickel insertion into the metal center of the hydrogenase. This is Hydrogenase maturation factor HypA from Pyrococcus horikoshii (strain ATCC 700860 / DSM 12428 / JCM 9974 / NBRC 100139 / OT-3).